The following is a 393-amino-acid chain: MNQKAYFGEFGGSFVSELLVPALRELEQAFDTCLKDEEFQKEYFRLLKDFVGRPSPLTLCQNIVSNPKVKLYLKREDLIHGGAHKTNQALGQALLAKKMGKTRIIAETGAGQHGVATAIACALLNLKCVIFMGGKDIKRQEMNVFRMRLLGAEVREVNSGSATLKDAVNEALRDWASSYKDTHYLLGTSAGPHPYPTMVKTFQKMIGDEVKSQILEKENRLPDYVIACVGGGSNAIGIFSAFLNDKEVKLIGVEPAGLGLETNKHGATLNKGRVGILHGNKTYLLQDDEGQIAESHSISAGLDYPGVGPEHSYLKEIGRAVYESASDIEALEAFRLLCQKEGIIPALESSHALAYALKLAQKCAQEKIIVVNLSGRGDKDLSTVYNALKGGLK.

Position 85 is an N6-(pyridoxal phosphate)lysine (lysine 85).

This sequence belongs to the TrpB family. Tetramer of two alpha and two beta chains. Requires pyridoxal 5'-phosphate as cofactor.

The enzyme catalyses (1S,2R)-1-C-(indol-3-yl)glycerol 3-phosphate + L-serine = D-glyceraldehyde 3-phosphate + L-tryptophan + H2O. The protein operates within amino-acid biosynthesis; L-tryptophan biosynthesis; L-tryptophan from chorismate: step 5/5. In terms of biological role, the beta subunit is responsible for the synthesis of L-tryptophan from indole and L-serine. The polypeptide is Tryptophan synthase beta chain (trpB) (Helicobacter pylori (strain J99 / ATCC 700824) (Campylobacter pylori J99)).